The primary structure comprises 89 residues: Small ribosomal subunit protein uS15 (89 aa).

Positions 1 to 21 are enriched in basic and acidic residues; the sequence is MVMTAEDKAQVIGEHKKHDGD. A disordered region spans residues 1 to 24; the sequence is MVMTAEDKAQVIGEHKKHDGDTGS.

Belongs to the universal ribosomal protein uS15 family. In terms of assembly, part of the 30S ribosomal subunit. Forms a bridge to the 50S subunit in the 70S ribosome, contacting the 23S rRNA.

Its function is as follows. One of the primary rRNA binding proteins, it binds directly to 16S rRNA where it helps nucleate assembly of the platform of the 30S subunit by binding and bridging several RNA helices of the 16S rRNA. In terms of biological role, forms an intersubunit bridge (bridge B4) with the 23S rRNA of the 50S subunit in the ribosome. The chain is Small ribosomal subunit protein uS15 from Solidesulfovibrio magneticus (strain ATCC 700980 / DSM 13731 / RS-1) (Desulfovibrio magneticus).